The following is a 98-amino-acid chain: NADH-ubiquinone oxidoreductase chain 4L (98 aa).

The next 3 helical transmembrane spans lie at 1 to 21, 29 to 49, and 61 to 81; these read MHYI…GALL, SLLC…LIAL, and IILL…LVMV.

Belongs to the complex I subunit 4L family. Core subunit of respiratory chain NADH dehydrogenase (Complex I) which is composed of 45 different subunits.

It localises to the mitochondrion inner membrane. The catalysed reaction is a ubiquinone + NADH + 5 H(+)(in) = a ubiquinol + NAD(+) + 4 H(+)(out). Core subunit of the mitochondrial membrane respiratory chain NADH dehydrogenase (Complex I) which catalyzes electron transfer from NADH through the respiratory chain, using ubiquinone as an electron acceptor. Part of the enzyme membrane arm which is embedded in the lipid bilayer and involved in proton translocation. This is NADH-ubiquinone oxidoreductase chain 4L (MT-ND4L) from Procavia capensis (Rock hyrax).